A 227-amino-acid polypeptide reads, in one-letter code: Protein FAM3C (227 aa).

The first 24 residues, 1 to 24 (MRVAGAAKLVVAVAVFLLTFYVIS), serve as a signal peptide directing secretion. 2 disulfide bridges follow: Cys58–Cys86 and Cys64–Cys221. Positions 67–225 (KHFAFKMASG…VEMEGCIPQK (159 aa)) constitute a GG-type lectin domain.

It belongs to the FAM3 family.

It is found in the secreted. The protein localises to the cytoplasmic vesicle. Its function is as follows. May be involved in retinal laminar formation. Promotes epithelial to mesenchymal transition. The chain is Protein FAM3C (FAM3C) from Bos taurus (Bovine).